An 87-amino-acid polypeptide reads, in one-letter code: Large ribosomal subunit protein bL27 (87 aa).

The interval 1–21 (MAHKKAGGSSRNGRDSESKRL) is disordered.

It belongs to the bacterial ribosomal protein bL27 family.

The sequence is that of Large ribosomal subunit protein bL27 from Aromatoleum aromaticum (strain DSM 19018 / LMG 30748 / EbN1) (Azoarcus sp. (strain EbN1)).